We begin with the raw amino-acid sequence, 307 residues long: uncharacterized protein (307 aa).

This sequence to B.burgdorferi BB0340.

This is an uncharacterized protein from Treponema pallidum (strain Nichols).